We begin with the raw amino-acid sequence, 138 residues long: Putative pre-16S rRNA nuclease (138 aa).

Belongs to the YqgF nuclease family.

It localises to the cytoplasm. Its function is as follows. Could be a nuclease involved in processing of the 5'-end of pre-16S rRNA. In Bacillus subtilis (strain 168), this protein is Putative pre-16S rRNA nuclease (yrrK).